The sequence spans 511 residues: Cytochrome P450 monooxygenase esdpI (511 aa).

Residues 14-34 (VRAGLAIGVAILAIIVLFPGI) traverse the membrane as a helical segment. Cysteine 453 is a heme binding site.

The protein belongs to the cytochrome P450 family. The cofactor is heme.

The protein resides in the membrane. It participates in secondary metabolite biosynthesis; terpenoid biosynthesis. Its function is as follows. Cytochrome P450 monooxygenase; part of the cluster that mediates the biosynthesis of shearones, diterpenoid pyrones (DPs) which are structurally diverse meroterpenoids consisting of a diterpene linked by a pyrone, and which may exhibit a range of bioactivities. Whitin the pathway, esdpI takes part in the molecular scaffold modification via the hydroxylation at C-20 and can transform shearone C into shearone G. The molecular scaffold is commonly biosynthesized by a series of enzymes including the non-reducing polyketide synthase (NR-PKS) esdpA that generates an alpha-pyrone; the prenyltransferase esdpC that attaches a geranylgeranyl pyrophosphate (GGPP) produced by the GGPP synthase (GGPPS) esdpD onto the pyrone unit; the FAD-dependent monooxygenase esdpE that converts an olefin on the diterpene unit into an epoxide; and the terpene cyclase esdpB that catalyzes the cyclization reactions to give the molecular backbone shearone A. In the modification steps, esdpF oxidizes the hydroxy group to a ketone at C-3 and esdpG then attaches hydroxy groups at both C-11 and C-12. After that, esdpI hydroxylates at C-20 and esdpH hydroxylates at C-6'. The ether bridge is generated by nucleophilic attack of the hydroxy group at C-20 to the carbonyl carbon at C-3. EsdpH can also functions prior to esdpI. The different combinations of these modification enzymes lead to the production of diverse shearone derivatives, shearone I being the end product of the pathway. The alpha-ketoglutarate-dependent dioxygenase esdpJ seems not to be involved in this pathway. The sequence is that of Cytochrome P450 monooxygenase esdpI from Penicillium shearii (Eupenicillium shearii).